The following is a 180-amino-acid chain: ATP-dependent protease subunit HslV (180 aa).

Threonine 5 is an active-site residue. Na(+) is bound by residues glycine 165, cysteine 168, and threonine 171.

This sequence belongs to the peptidase T1B family. HslV subfamily. In terms of assembly, a double ring-shaped homohexamer of HslV is capped on each side by a ring-shaped HslU homohexamer. The assembly of the HslU/HslV complex is dependent on binding of ATP.

It is found in the cytoplasm. The catalysed reaction is ATP-dependent cleavage of peptide bonds with broad specificity.. Its activity is regulated as follows. Allosterically activated by HslU binding. Its function is as follows. Protease subunit of a proteasome-like degradation complex believed to be a general protein degrading machinery. This Helicobacter hepaticus (strain ATCC 51449 / 3B1) protein is ATP-dependent protease subunit HslV.